The chain runs to 276 residues: Protein TabB (276 aa).

The protein belongs to the transferase hexapeptide repeat family. It depends on pyridoxal 5'-phosphate as a cofactor.

The polypeptide is Protein TabB (tabB) (Pseudomonas amygdali pv. tabaci (Pseudomonas syringae pv. tabaci)).